Here is a 728-residue protein sequence, read N- to C-terminus: Probable ubiquitin-conjugating enzyme protein 17 (728 aa).

A compositionally biased stretch (low complexity) spans 1 to 17 (MSSQASQRSSSTSAVAQ). 2 disordered regions span residues 1–23 (MSSQASQRSSSTSAVAQKTRERR) and 123–155 (SSRSADEQKRRARRNSSASLSHKGTGYGTGSTR). The 167-residue stretch at 402–568 (DRTKRIAKEL…IEHATLNYAI (167 aa)) folds into the UBC core domain. Catalysis depends on Cys495, which acts as the Glycyl thioester intermediate. Disordered stretches follow at residues 649–678 (PFAKEEAEESERLKREQSEKEEKQKKEAAA) and 709–728 (RTQPTGDYSVPSVNEPSTSS). Positions 658–678 (SERLKREQSEKEEKQKKEAAA) are enriched in basic and acidic residues. Over residues 710–728 (TQPTGDYSVPSVNEPSTSS) the composition is skewed to polar residues.

This sequence belongs to the ubiquitin-conjugating enzyme family.

The protein is Probable ubiquitin-conjugating enzyme protein 17 (ubc-17) of Caenorhabditis elegans.